Here is a 139-residue protein sequence, read N- to C-terminus: Large ribosomal subunit protein uL16 (139 aa).

This sequence belongs to the universal ribosomal protein uL16 family. In terms of assembly, part of the 50S ribosomal subunit.

In terms of biological role, binds 23S rRNA and is also seen to make contacts with the A and possibly P site tRNAs. This Prosthecochloris aestuarii (strain DSM 271 / SK 413) protein is Large ribosomal subunit protein uL16.